The chain runs to 616 residues: MPKYRSHTTTHGRNMAGARALWRATGMTDDDFGKPIIAVVNSFTQFVPGHVHLRDLGKLVAEQIVASGGVAKEFNTIAVDDGIAMGHGGMLYSLPSRELIADSVEYMVNAHCADAMVCISNCDKITPGMLMASLRLNIPVIFVSGGPMEAGKTKLSDKIIKLDLIDAMIQGANPNVSDEESAQIERSACPTCGSCSGMFTANSMNCLNEALGLALPGNGSLLATHADRKQLFLDAGKHIVALTKRYYEQDDVSALPRNIANKAAFENAMILDIAMGGSTNTVLHLLAAAQEGEIDFSMTDIDHLSRKVPHLCKVAPSTQKYHMEDVHRAGGVIGILGELDRAGLLNRDVSNVLGLNLTQTLEAYDVMLTQDEGVKQMYAAGPAGIRTTKAFSQDCRYPSLDTDREEGCIRTREHAYSQDGGLAVLYGNIAADGCIVKTAGVDKDSLTFRGPAKVFESQDEAVEAILGGKVVAGDVVVIRYEGPKGGPGMQEMLYPTTYLKSMGLGKSCALLTDGRFSGGTSGLSIGHVSPEAASGGLIGLVQDGDFINIDIPNRGIVLDVSEAELAARRETEEAHGDAAWSPKGRERQVSYALRAYAMLATSADKGAVRDKSKLGG.

Aspartate 81 contacts Mg(2+). Cysteine 122 contributes to the [2Fe-2S] cluster binding site. Positions 123 and 124 each coordinate Mg(2+). Residue lysine 124 is modified to N6-carboxylysine. A [2Fe-2S] cluster-binding site is contributed by cysteine 195. Glutamate 491 contributes to the Mg(2+) binding site. Serine 517 (proton acceptor) is an active-site residue.

Belongs to the IlvD/Edd family. As to quaternary structure, homodimer. It depends on [2Fe-2S] cluster as a cofactor. The cofactor is Mg(2+).

The enzyme catalyses (2R)-2,3-dihydroxy-3-methylbutanoate = 3-methyl-2-oxobutanoate + H2O. It carries out the reaction (2R,3R)-2,3-dihydroxy-3-methylpentanoate = (S)-3-methyl-2-oxopentanoate + H2O. The protein operates within amino-acid biosynthesis; L-isoleucine biosynthesis; L-isoleucine from 2-oxobutanoate: step 3/4. It participates in amino-acid biosynthesis; L-valine biosynthesis; L-valine from pyruvate: step 3/4. Functionally, functions in the biosynthesis of branched-chain amino acids. Catalyzes the dehydration of (2R,3R)-2,3-dihydroxy-3-methylpentanoate (2,3-dihydroxy-3-methylvalerate) into 2-oxo-3-methylpentanoate (2-oxo-3-methylvalerate) and of (2R)-2,3-dihydroxy-3-methylbutanoate (2,3-dihydroxyisovalerate) into 2-oxo-3-methylbutanoate (2-oxoisovalerate), the penultimate precursor to L-isoleucine and L-valine, respectively. The chain is Dihydroxy-acid dehydratase from Yersinia pseudotuberculosis serotype O:3 (strain YPIII).